The following is an 83-amino-acid chain: U-actitoxin-Avd8d (83 aa).

Positions 1–19 (MASTRLFVLLVIGTVLLCQ) are cleaved as a signal peptide. Positions 20-38 (VSGFLDELLAEHELPQDMT) are excised as a propeptide.

The protein belongs to the sea anemone 8 toxin family.

The protein resides in the secreted. The protein localises to the nematocyst. In Anemonia viridis (Snakelocks anemone), this protein is U-actitoxin-Avd8d.